Here is a 654-residue protein sequence, read N- to C-terminus: tRNA 5-methylaminomethyl-2-thiouridine biosynthesis bifunctional protein MnmC (654 aa).

The tract at residues 1-235 is tRNA (mnm(5)s(2)U34)-methyltransferase; it reads MSDFQHAQLD…KREMLSGTYQ (235 aa). The segment at 261 to 654 is FAD-dependent cmnm(5)s(2)U34 oxidoreductase; sequence VGGGLAGCAS…LRDLVRGQRG (394 aa).

It in the N-terminal section; belongs to the methyltransferase superfamily. tRNA (mnm(5)s(2)U34)-methyltransferase family. In the C-terminal section; belongs to the DAO family. Requires FAD as cofactor.

It is found in the cytoplasm. The enzyme catalyses 5-aminomethyl-2-thiouridine(34) in tRNA + S-adenosyl-L-methionine = 5-methylaminomethyl-2-thiouridine(34) in tRNA + S-adenosyl-L-homocysteine + H(+). Functionally, catalyzes the last two steps in the biosynthesis of 5-methylaminomethyl-2-thiouridine (mnm(5)s(2)U) at the wobble position (U34) in tRNA. Catalyzes the FAD-dependent demodification of cmnm(5)s(2)U34 to nm(5)s(2)U34, followed by the transfer of a methyl group from S-adenosyl-L-methionine to nm(5)s(2)U34, to form mnm(5)s(2)U34. This is tRNA 5-methylaminomethyl-2-thiouridine biosynthesis bifunctional protein MnmC from Pseudomonas aeruginosa (strain ATCC 15692 / DSM 22644 / CIP 104116 / JCM 14847 / LMG 12228 / 1C / PRS 101 / PAO1).